A 175-amino-acid chain; its full sequence is Nucleoside triphosphate/diphosphate phosphatase (175 aa).

The active-site Proton donor is arginine 23. 6 residues coordinate Mg(2+): asparagine 87, aspartate 103, aspartate 105, aspartate 107, aspartate 120, and glutamate 123.

Belongs to the Ntdp family. Requires Mg(2+) as cofactor.

It carries out the reaction a ribonucleoside 5'-triphosphate + H2O = a ribonucleoside 5'-diphosphate + phosphate + H(+). The catalysed reaction is a ribonucleoside 5'-diphosphate + H2O = a ribonucleoside 5'-phosphate + phosphate + H(+). Has nucleoside phosphatase activity towards nucleoside triphosphates and nucleoside diphosphates. The protein is Nucleoside triphosphate/diphosphate phosphatase of Halalkalibacterium halodurans (strain ATCC BAA-125 / DSM 18197 / FERM 7344 / JCM 9153 / C-125) (Bacillus halodurans).